Reading from the N-terminus, the 200-residue chain is Imidazole glycerol phosphate synthase subunit HisH (200 aa).

The Glutamine amidotransferase type-1 domain occupies 3-200 (EVALIDAGGA…LRNFLEMDAA (198 aa)). Cys78 serves as the catalytic Nucleophile. Residues His179 and Glu181 contribute to the active site.

As to quaternary structure, heterodimer of HisH and HisF.

It localises to the cytoplasm. The catalysed reaction is 5-[(5-phospho-1-deoxy-D-ribulos-1-ylimino)methylamino]-1-(5-phospho-beta-D-ribosyl)imidazole-4-carboxamide + L-glutamine = D-erythro-1-(imidazol-4-yl)glycerol 3-phosphate + 5-amino-1-(5-phospho-beta-D-ribosyl)imidazole-4-carboxamide + L-glutamate + H(+). It catalyses the reaction L-glutamine + H2O = L-glutamate + NH4(+). It functions in the pathway amino-acid biosynthesis; L-histidine biosynthesis; L-histidine from 5-phospho-alpha-D-ribose 1-diphosphate: step 5/9. In terms of biological role, IGPS catalyzes the conversion of PRFAR and glutamine to IGP, AICAR and glutamate. The HisH subunit catalyzes the hydrolysis of glutamine to glutamate and ammonia as part of the synthesis of IGP and AICAR. The resulting ammonia molecule is channeled to the active site of HisF. The chain is Imidazole glycerol phosphate synthase subunit HisH from Xylella fastidiosa (strain Temecula1 / ATCC 700964).